The chain runs to 564 residues: Dihydroxy-acid dehydratase (564 aa).

Cysteine 51 provides a ligand contact to [2Fe-2S] cluster. Aspartate 83 is a Mg(2+) binding site. Position 124 (cysteine 124) interacts with [2Fe-2S] cluster. The Mg(2+) site is built by aspartate 125 and lysine 126. Lysine 126 carries the N6-carboxylysine modification. Residue cysteine 196 participates in [2Fe-2S] cluster binding. Glutamate 448 provides a ligand contact to Mg(2+). Serine 474 serves as the catalytic Proton acceptor.

This sequence belongs to the IlvD/Edd family. In terms of assembly, homodimer. [2Fe-2S] cluster serves as cofactor. Requires Mg(2+) as cofactor.

The enzyme catalyses (2R)-2,3-dihydroxy-3-methylbutanoate = 3-methyl-2-oxobutanoate + H2O. The catalysed reaction is (2R,3R)-2,3-dihydroxy-3-methylpentanoate = (S)-3-methyl-2-oxopentanoate + H2O. It participates in amino-acid biosynthesis; L-isoleucine biosynthesis; L-isoleucine from 2-oxobutanoate: step 3/4. It functions in the pathway amino-acid biosynthesis; L-valine biosynthesis; L-valine from pyruvate: step 3/4. Functions in the biosynthesis of branched-chain amino acids. Catalyzes the dehydration of (2R,3R)-2,3-dihydroxy-3-methylpentanoate (2,3-dihydroxy-3-methylvalerate) into 2-oxo-3-methylpentanoate (2-oxo-3-methylvalerate) and of (2R)-2,3-dihydroxy-3-methylbutanoate (2,3-dihydroxyisovalerate) into 2-oxo-3-methylbutanoate (2-oxoisovalerate), the penultimate precursor to L-isoleucine and L-valine, respectively. The sequence is that of Dihydroxy-acid dehydratase from Pyrobaculum calidifontis (strain DSM 21063 / JCM 11548 / VA1).